The chain runs to 67 residues: MAAKKGKKTSTKKSDYYKVEGNTVERLKKVCPKCGAGVFMAEHLNRFACGKCGYLEYKKNEKAESEE.

Zn(2+)-binding residues include C31, C34, C49, and C52. Residues 31–52 (CPKCGAGVFMAEHLNRFACGKC) form a C4-type zinc finger.

It belongs to the eukaryotic ribosomal protein eS31 family. Part of the 30S ribosomal subunit. It depends on Zn(2+) as a cofactor.

The chain is Small ribosomal subunit protein eS31 from Methanococcus maripaludis (strain C6 / ATCC BAA-1332).